Reading from the N-terminus, the 372-residue chain is RIHIEKIIGSGESGEVCYGRLQVPGQRDVPVAIKALKAGYTERQRQDFLREAAIMGQFDHPNIIRLEGVVTRGRLAMIVTEYMENGSLDAFLRTHDGQFTILQLVGMLKGVGAGMRYLSDLGYIHRDLAARNILVDGRLVCKVSDFGLSRALEDDPEAAYTTAGGKIPIRWTAPEAIAFRTFSSASDVWSFGVVMWEVLAYGERPYWNMTNQDVISSVEEGYRLPAPMGCPRALHQLMLDCWHKDRAQRPRFSHVVSVLEALVHSPESLRATATVSRCPAPAFARSCFDLRAGGNGNGDLTVGDWLDSIRMGRYRDHFAAGGYSSLGMVLHMNAQDVRALGITLMGHQKKILGSIQTMRSQLSCTQGPRRHL.

The region spanning 2–263 (IHIEKIIGSG…HVVSVLEALV (262 aa)) is the Protein kinase domain. ATP is bound by residues 8–16 (IGSGESGEV) and lysine 34. Aspartate 127 serves as the catalytic Proton acceptor. Tyrosine 206 bears the Phosphotyrosine; by autocatalysis mark. Residues 297 to 372 (NGDLTVGDWL…SCTQGPRRHL (76 aa)) enclose the SAM domain. The PDZ-binding signature appears at 370 to 372 (RHL).

In terms of assembly, heterotetramer upon binding of the ligand. The heterotetramer is composed of an ephrin dimer and a receptor dimer. Oligomerization is probably required to induce biological responses. May also form heterodimers with other ephrin receptors. Interacts with FYN; possible downstream effector of EPHA8 in regulation of cell adhesion. Interacts with PIK3CG; regulates integrin-mediated cell adhesion to substrate. Interacts with TIAM1; regulates clathrin-mediated endocytosis of EPHA8. Interacts with ANKS1A and ANKS1B; EPHA8 kinase activity-independent but stimulated by EPHA8 ubiquitination. Post-translationally, phosphorylated. Phosphorylation is stimulated upon binding of its ligands including EFNA2, EFNA3 and EFNA5. Autophosphorylation on Tyr-206 modulates tyrosine kinase activity. Ubiquitinated. Ubiquitination by CBL regulates the receptor stability and activity through proteasomal degradation. ANKS1A prevents ubiquitination and degradation. As to expression, most abundant in brain.

Its subcellular location is the cell membrane. It is found in the cell projection. The protein resides in the early endosome membrane. The enzyme catalyses L-tyrosyl-[protein] + ATP = O-phospho-L-tyrosyl-[protein] + ADP + H(+). In terms of biological role, receptor tyrosine kinase which binds promiscuously GPI-anchored ephrin-A family ligands residing on adjacent cells, leading to contact-dependent bidirectional signaling into neighboring cells. The signaling pathway downstream of the receptor is referred to as forward signaling while the signaling pathway downstream of the ephrin ligand is referred to as reverse signaling. The GPI-anchored ephrin-A EFNA2, EFNA3, and EFNA5 are able to activate EPHA8 through phosphorylation. With EFNA5 may regulate integrin-mediated cell adhesion and migration on fibronectin substrate but also neurite outgrowth. During development of the nervous system also plays a role in axon guidance. Downstream effectors of the EPHA8 signaling pathway include FYN which promotes cell adhesion upon activation by EPHA8 and the MAP kinases in the stimulation of neurite outgrowth. The protein is Ephrin type-A receptor 8 (Epha8) of Rattus norvegicus (Rat).